A 557-amino-acid polypeptide reads, in one-letter code: Urocanate hydratase (557 aa).

NAD(+) contacts are provided by residues 53–54, Gln131, 177–179, Glu197, Arg202, 243–244, 264–268, 274–275, and Tyr323; these read GG, GMG, NA, QTSAH, and YL. The active site involves Cys411. The disordered stretch occupies residues 445–464; the sequence is LDSGSVSSPNRETESMRDGS. A compositionally biased stretch (basic and acidic residues) spans 455 to 464; it reads RETESMRDGS. Gly493 contacts NAD(+).

Belongs to the urocanase family. Requires NAD(+) as cofactor.

It is found in the cytoplasm. It catalyses the reaction 4-imidazolone-5-propanoate = trans-urocanate + H2O. The protein operates within amino-acid degradation; L-histidine degradation into L-glutamate; N-formimidoyl-L-glutamate from L-histidine: step 2/3. Functionally, catalyzes the conversion of urocanate to 4-imidazolone-5-propionate. In Pseudomonas putida (strain W619), this protein is Urocanate hydratase.